A 572-amino-acid polypeptide reads, in one-letter code: Flagellin B (572 aa).

The protein belongs to the bacterial flagellin family. In terms of assembly, heteromer of flaA and flaB.

It is found in the secreted. The protein resides in the bacterial flagellum. Functionally, flagellin is the subunit protein which polymerizes to form the filaments of bacterial flagella. The sequence is that of Flagellin B (flaB) from Campylobacter jejuni subsp. jejuni serotype O:2 (strain ATCC 700819 / NCTC 11168).